Reading from the N-terminus, the 215-residue chain is Cytochrome b6 (215 aa).

The helical transmembrane segment at 32-52 threads the bilayer; sequence IFYCLGGIVFVSFLIQVATGF. Heme c is bound at residue cysteine 35. Residues histidine 86 and histidine 100 each contribute to the heme b site. Transmembrane regions (helical) follow at residues 90 to 110, 116 to 136, and 186 to 206; these read ASMM…TGGF, LTWV…VTGY, and LHTF…FLMI. Heme b is bound by residues histidine 187 and histidine 202.

Belongs to the cytochrome b family. PetB subfamily. The 4 large subunits of the cytochrome b6-f complex are cytochrome b6, subunit IV (17 kDa polypeptide, PetD), cytochrome f and the Rieske protein, while the 4 small subunits are PetG, PetL, PetM and PetN. The complex functions as a dimer. Heme b serves as cofactor. It depends on heme c as a cofactor.

Its subcellular location is the plastid. It localises to the chloroplast thylakoid membrane. Its function is as follows. Component of the cytochrome b6-f complex, which mediates electron transfer between photosystem II (PSII) and photosystem I (PSI), cyclic electron flow around PSI, and state transitions. In Porphyra purpurea (Red seaweed), this protein is Cytochrome b6.